The primary structure comprises 279 residues: uncharacterized protein (279 aa).

The signal sequence occupies residues 1–21 (MKIIRTLFLLLIAVYGSSVVA).

To E.coli YfcO.

This is an uncharacterized protein from Salmonella typhimurium (strain LT2 / SGSC1412 / ATCC 700720).